Reading from the N-terminus, the 813-residue chain is Molybdenum cofactor sulfurase (813 aa).

An N6-(pyridoxal phosphate)lysine modification is found at Lys228. Cys391 is a catalytic residue. A disordered region spans residues 625 to 670; it reads PSLRHAKAHMQKHQGPKRSAAIEKSSAHSFHDPPTPPDSDSENRKR. Over residues 628–640 the composition is skewed to basic residues; that stretch reads RHAKAHMQKHQGP. The MOSC domain maps to 648–812; the sequence is KSSAHSFHDP…IKVGDKVSIG (165 aa).

The protein belongs to the class-V pyridoxal-phosphate-dependent aminotransferase family. MOCOS subfamily. The cofactor is pyridoxal 5'-phosphate.

The enzyme catalyses Mo-molybdopterin + L-cysteine + AH2 = thio-Mo-molybdopterin + L-alanine + A + H2O. Functionally, sulfurates the molybdenum cofactor. Sulfation of molybdenum is essential for xanthine dehydrogenase (XDH) and aldehyde oxidase (ADO) enzymes in which molybdenum cofactor is liganded by 1 oxygen and 1 sulfur atom in active form. This Botryotinia fuckeliana (strain B05.10) (Noble rot fungus) protein is Molybdenum cofactor sulfurase.